A 104-amino-acid polypeptide reads, in one-letter code: Probable RNA-binding protein PA4753 (104 aa).

Residues Met1–Asn97 form the CRM domain.

This Pseudomonas aeruginosa (strain ATCC 15692 / DSM 22644 / CIP 104116 / JCM 14847 / LMG 12228 / 1C / PRS 101 / PAO1) protein is Probable RNA-binding protein PA4753.